A 105-amino-acid chain; its full sequence is UPF0145 protein jk0060 (105 aa).

It belongs to the UPF0145 family.

The protein is UPF0145 protein jk0060 of Corynebacterium jeikeium (strain K411).